The chain runs to 423 residues: tRNA-dihydrouridine(16/17) synthase [NAD(P)(+)] (423 aa).

Thr-2 bears the N-acetylthreonine mark. FMN contacts are provided by residues 35–37 and Gln-92; that span reads PMV. Cys-121 (proton donor) is an active-site residue. FMN-binding positions include Lys-160, His-188, 223-225, and 247-248; these read NGN and AE. The disordered stretch occupies residues 404-423; sequence KKRKADVPLESADKKKDVKA. Basic and acidic residues predominate over residues 408–423; that stretch reads ADVPLESADKKKDVKA.

This sequence belongs to the Dus family. Dus1 subfamily. Monomer. It depends on FMN as a cofactor.

The catalysed reaction is 5,6-dihydrouridine(16) in tRNA + NADP(+) = uridine(16) in tRNA + NADPH + H(+). The enzyme catalyses 5,6-dihydrouridine(16) in tRNA + NAD(+) = uridine(16) in tRNA + NADH + H(+). It catalyses the reaction 5,6-dihydrouridine(17) in tRNA + NAD(+) = uridine(17) in tRNA + NADH + H(+). It carries out the reaction 5,6-dihydrouridine(17) in tRNA + NADP(+) = uridine(17) in tRNA + NADPH + H(+). The catalysed reaction is a 5,6-dihydrouridine in mRNA + NAD(+) = a uridine in mRNA + NADH + H(+). The enzyme catalyses a 5,6-dihydrouridine in mRNA + NADP(+) = a uridine in mRNA + NADPH + H(+). In terms of biological role, catalyzes the synthesis of dihydrouridine, a modified base found in the D-loop of most tRNAs. Specifically modifies U16 and U17 in cytoplasmic tRNAs. Also able to mediate dihydrouridylation of some mRNAs, thereby affecting their translation. In Saccharomyces cerevisiae (strain ATCC 204508 / S288c) (Baker's yeast), this protein is tRNA-dihydrouridine(16/17) synthase [NAD(P)(+)].